We begin with the raw amino-acid sequence, 375 residues long: Queuine tRNA-ribosyltransferase (375 aa).

Aspartate 94 (proton acceptor) is an active-site residue. Substrate contacts are provided by residues 94-98 (DSGGF), aspartate 148, glutamine 191, and glycine 218. The segment at 249–255 (GVGSPDD) is RNA binding. Aspartate 268 functions as the Nucleophile in the catalytic mechanism. Positions 273–277 (TRIAR) are RNA binding; important for wobble base 34 recognition. Cysteine 306, cysteine 308, cysteine 311, and histidine 337 together coordinate Zn(2+).

It belongs to the queuine tRNA-ribosyltransferase family. Homodimer. Within each dimer, one monomer is responsible for RNA recognition and catalysis, while the other monomer binds to the replacement base PreQ1. It depends on Zn(2+) as a cofactor.

It carries out the reaction 7-aminomethyl-7-carbaguanine + guanosine(34) in tRNA = 7-aminomethyl-7-carbaguanosine(34) in tRNA + guanine. Its pathway is tRNA modification; tRNA-queuosine biosynthesis. In terms of biological role, catalyzes the base-exchange of a guanine (G) residue with the queuine precursor 7-aminomethyl-7-deazaguanine (PreQ1) at position 34 (anticodon wobble position) in tRNAs with GU(N) anticodons (tRNA-Asp, -Asn, -His and -Tyr). Catalysis occurs through a double-displacement mechanism. The nucleophile active site attacks the C1' of nucleotide 34 to detach the guanine base from the RNA, forming a covalent enzyme-RNA intermediate. The proton acceptor active site deprotonates the incoming PreQ1, allowing a nucleophilic attack on the C1' of the ribose to form the product. After dissociation, two additional enzymatic reactions on the tRNA convert PreQ1 to queuine (Q), resulting in the hypermodified nucleoside queuosine (7-(((4,5-cis-dihydroxy-2-cyclopenten-1-yl)amino)methyl)-7-deazaguanosine). The protein is Queuine tRNA-ribosyltransferase of Thermoanaerobacter pseudethanolicus (strain ATCC 33223 / 39E) (Clostridium thermohydrosulfuricum).